The following is a 199-amino-acid chain: Fe/S biogenesis protein NfuA (199 aa).

2 residues coordinate [4Fe-4S] cluster: cysteine 151 and cysteine 154.

It belongs to the NfuA family. As to quaternary structure, homodimer. [4Fe-4S] cluster serves as cofactor.

Functionally, involved in iron-sulfur cluster biogenesis. Binds a 4Fe-4S cluster, can transfer this cluster to apoproteins, and thereby intervenes in the maturation of Fe/S proteins. Could also act as a scaffold/chaperone for damaged Fe/S proteins. In Xanthomonas oryzae pv. oryzae (strain PXO99A), this protein is Fe/S biogenesis protein NfuA.